A 542-amino-acid chain; its full sequence is Chaperonin GroEL (542 aa).

ATP is bound by residues 29–32 (TLGP), 86–90 (DGTTT), Gly413, 477–479 (NAA), and Asp493.

The protein belongs to the chaperonin (HSP60) family. In terms of assembly, forms a cylinder of 14 subunits composed of two heptameric rings stacked back-to-back. Interacts with the co-chaperonin GroES.

It localises to the cytoplasm. It carries out the reaction ATP + H2O + a folded polypeptide = ADP + phosphate + an unfolded polypeptide.. In terms of biological role, together with its co-chaperonin GroES, plays an essential role in assisting protein folding. The GroEL-GroES system forms a nano-cage that allows encapsulation of the non-native substrate proteins and provides a physical environment optimized to promote and accelerate protein folding. This Beutenbergia cavernae (strain ATCC BAA-8 / DSM 12333 / CCUG 43141 / JCM 11478 / NBRC 16432 / NCIMB 13614 / HKI 0122) protein is Chaperonin GroEL.